The following is a 34-amino-acid chain: Photosystem I reaction center subunit XII (34 aa).

The helical transmembrane segment at 10–32 threads the bilayer; that stretch reads IYIALVVAAHAAILALRLSVSLY.

Belongs to the PsaM family.

It is found in the cellular thylakoid membrane. The chain is Photosystem I reaction center subunit XII from Synechococcus sp. (strain RCC307).